Consider the following 150-residue polypeptide: Transcription antitermination protein NusB (150 aa).

This sequence belongs to the NusB family.

Involved in transcription antitermination. Required for transcription of ribosomal RNA (rRNA) genes. Binds specifically to the boxA antiterminator sequence of the ribosomal RNA (rrn) operons. This chain is Transcription antitermination protein NusB, found in Chloroflexus aggregans (strain MD-66 / DSM 9485).